The primary structure comprises 483 residues: SWI/SNF-related matrix-associated actin-dependent regulator of chromatin subfamily D member 3 (483 aa).

Ala2 is subject to N-acetylalanine. The disordered stretch occupies residues 27 to 102 (RPGMPSGARM…ARSRSAKRRK (76 aa)). The segment covering 78-88 (QSQAQGQGQPV) has biased composition (low complexity). Residue Ser178 is modified to Phosphoserine. One can recognise an SWIB/MDM2 domain in the interval 258-335 (YQPPQFKLDP…PQRLTALLLP (78 aa)).

The protein belongs to the SMARCD family. In terms of assembly, component of the multiprotein chromatin-remodeling complexes SWI/SNF: SWI/SNF-A (BAF), SWI/SNF-B (PBAF) and related complexes. The canonical complex contains a catalytic subunit (either SMARCA4/BRG1/BAF190A or SMARCA2/BRM/BAF190B) and at least SMARCE1, ACTL6A/BAF53, SMARCC1/BAF155, SMARCC2/BAF170, and SMARCB1/SNF5/BAF47. Other subunits specific to each of the complexes may also be present permitting several possible combinations developmentally and tissue specific. Component of the BAF complex, which includes at least actin (ACTB), ARID1A/BAF250A, ARID1B/BAF250B, SMARCA2/BRM, SMARCA4/BRG1/BAF190A, ACTL6A/BAF53, ACTL6B/BAF53B, SMARCE1/BAF57, SMARCC1/BAF155, SMARCC2/BAF170, SMARCB1/SNF5/INI1, and one or more SMARCD1/BAF60A, SMARCD2/BAF60B, or SMARCD3/BAF60C. In muscle cells, the BAF complex also contains DPF3. Component of neural progenitors-specific chromatin remodeling complex (npBAF complex) composed of at least, ARID1A/BAF250A or ARID1B/BAF250B, SMARCD1/BAF60A, SMARCD3/BAF60C, SMARCA2/BRM/BAF190B, SMARCA4/BRG1/BAF190A, SMARCB1/BAF47, SMARCC1/BAF155, SMARCE1/BAF57, SMARCC2/BAF170, PHF10/BAF45A, ACTL6A/BAF53A and actin. Component of neuron-specific chromatin remodeling complex (nBAF complex) composed of at least, ARID1A/BAF250A or ARID1B/BAF250B, SMARCD1/BAF60A, SMARCD3/BAF60C, SMARCA2/BRM/BAF190B, SMARCA4/BRG1/BAF190A, SMARCB1/BAF47, SMARCC1/BAF155, SMARCE1/BAF57, SMARCC2/BAF170, DPF1/BAF45B, DPF3/BAF45C, ACTL6B/BAF53B and actin. May be a component of the SWI/SNF-B (PBAF) chromatin remodeling complex, at least composed of SMARCA4/BRG1, SMARCB1/BAF47/SNF5, ACTL6A/BAF53A or ACTL6B/BAF53B, SMARCE1/BAF57, SMARCD1/BAF60A, SMARCD2/BAF60B, perhaps SMARCD3/BAF60C, SMARCC1/BAF155, SMARCC2/BAF170, PBRM1/BAF180, ARID2/BAF200 and actin. Component of SWI/SNF (GBAF) subcomplex, which includes at least BICRA or BICRAL (mutually exclusive), BRD9, SS18, SMARCA2/BRM, SMARCA4/BRG1/BAF190A, ACTL6A/BAF53, SMARCC1/BAF155, and SMARCD1/BAF60A. Interacts with SMARCA4/BRG1/BAF190A. The precise distribution of the related SMARCD1, SMARCD2 and SMARCD3 proteins among these and other SWI/SNF nucleosome-remodeling complexes is not fully known. May allow recruitment of SWI/SNF containing complexes specifically to promoters where these factors are located. Also interacts with several nuclear receptors including PPARG/NR1C3, RXRA/NR1F1, ESR1, NR5A1, NR5A2/LRH1 and other transcriptional activators including the HLH protein SREBF1/SREBP1 and the homeobox protein PBX1. Interacts with PRDM1/BLIMP1. As to expression, ubiquitously expressed.

Its subcellular location is the nucleus. Functionally, involved in transcriptional activation and repression of select genes by chromatin remodeling (alteration of DNA-nucleosome topology). Component of SWI/SNF chromatin remodeling complexes that carry out key enzymatic activities, changing chromatin structure by altering DNA-histone contacts within a nucleosome in an ATP-dependent manner. Stimulates nuclear receptor mediated transcription. Belongs to the neural progenitors-specific chromatin remodeling complex (npBAF complex) and the neuron-specific chromatin remodeling complex (nBAF complex). During neural development a switch from a stem/progenitor to a postmitotic chromatin remodeling mechanism occurs as neurons exit the cell cycle and become committed to their adult state. The transition from proliferating neural stem/progenitor cells to postmitotic neurons requires a switch in subunit composition of the npBAF and nBAF complexes. As neural progenitors exit mitosis and differentiate into neurons, npBAF complexes which contain ACTL6A/BAF53A and PHF10/BAF45A, are exchanged for homologous alternative ACTL6B/BAF53B and DPF1/BAF45B or DPF3/BAF45C subunits in neuron-specific complexes (nBAF). The npBAF complex is essential for the self-renewal/proliferative capacity of the multipotent neural stem cells. The nBAF complex along with CREST plays a role regulating the activity of genes essential for dendrite growth. The polypeptide is SWI/SNF-related matrix-associated actin-dependent regulator of chromatin subfamily D member 3 (Smarcd3) (Mus musculus (Mouse)).